The following is a 327-amino-acid chain: Ribonucleoside-diphosphate reductase small chain (327 aa).

Residues D70, E101, and H104 each contribute to the Fe cation site. The active site involves Y108. Fe cation is bound by residues E164, E198, and H201.

Belongs to the ribonucleoside diphosphate reductase small chain family. In terms of assembly, heterotetramer composed of a homodimer of the large subunit (R1) and a homodimer of the small subunit (R2). Larger multisubunit protein complex are also active, composed of (R1)n(R2)n. Requires Fe cation as cofactor.

It carries out the reaction a 2'-deoxyribonucleoside 5'-diphosphate + [thioredoxin]-disulfide + H2O = a ribonucleoside 5'-diphosphate + [thioredoxin]-dithiol. Functionally, ribonucleoside-diphosphate reductase holoenzyme provides the precursors necessary for viral DNA synthesis. Allows virus growth in non-dividing cells. Catalyzes the biosynthesis of deoxyribonucleotides from the corresponding ribonucleotides. The chain is Ribonucleoside-diphosphate reductase small chain from African swine fever virus (isolate Tick/Malawi/Lil 20-1/1983) (ASFV).